Reading from the N-terminus, the 474-residue chain is Pyruvate kinase (474 aa).

Arginine 32 is a substrate binding site. The K(+) site is built by asparagine 34, serine 36, and aspartate 66. Asparagine 34 to histidine 37 contributes to the ATP binding site. Residues arginine 73 and lysine 155 each coordinate ATP. Mg(2+) is bound at residue glutamate 221. Substrate-binding residues include glycine 244, aspartate 245, and threonine 277. Position 245 (aspartate 245) interacts with Mg(2+).

It belongs to the pyruvate kinase family. As to quaternary structure, homotetramer. Mg(2+) is required as a cofactor. It depends on K(+) as a cofactor.

The catalysed reaction is pyruvate + ATP = phosphoenolpyruvate + ADP + H(+). It participates in carbohydrate degradation; glycolysis; pyruvate from D-glyceraldehyde 3-phosphate: step 5/5. The chain is Pyruvate kinase (pykF) from Clostridium perfringens (strain 13 / Type A).